A 257-amino-acid polypeptide reads, in one-letter code: Transmembrane protein 101 (257 aa).

Helical transmembrane passes span 21 to 40 (VLLTRCPFWGCFSQLMLYAE), 52 to 72 (VPYLYFDMGAAVLCASFMSFG), 77 to 97 (WFALGAALQLAISTYAAYIGG), 110 to 130 (YSRTVAIIGGFLVLASGAGEL), 139 to 159 (SLQSTGQVFLGIYLICVAYSL), 182 to 202 (LFFVLYGILALAFLSGYYVTL), 206 to 226 (ILAVLLPPVMLLIDGNVAYWH), and 233 to 253 (FWNQMKLLGESVGIFGTAVIL).

Its subcellular location is the membrane. Functionally, may activate NF-kappa-B signaling pathways. This Homo sapiens (Human) protein is Transmembrane protein 101 (TMEM101).